The chain runs to 858 residues: Tetratricopeptide repeat protein 7A (858 aa).

Phosphoserine is present on S51. TPR repeat units lie at residues 121 to 157, 177 to 210, 414 to 447, 497 to 531, 533 to 565, and 566 to 599; these read CEAMLILGKLHYVEGSYRDAISMYARAGIDDMSMENK, ERLPNSIASRFRLTEREEEVITCFERASWIAQVF, FHLWYQVALSMVACGKSAYAVSLLRECVKLRPSD, YSLQATDATLKSKQDELHRKALQTLERAQQLAPSD, QVILYVSLQLALVRQISSAMEQLQEALKVRKDD, and AHALHLLALLFSAQKHHQHALDVVNMAITEHPEN. S182 bears the Phosphoserine mark. Residues S647, S678, S679, and S690 each carry the phosphoserine modification. T693 bears the Phosphothreonine mark. TPR repeat units follow at residues 745–778, 780–812, and 813–846; these read HSVLYMRGRLAEVKGNLEEAKQLYKEALTVNPDG, RIMHSLGLMLSRLGHKSLAQKVLRDAVERQSTC, and HEAWQGLGEVLQAQGQNEAAVDCFLTALELEASS.

As to quaternary structure, component of a phosphatidylinositol 4-kinase (PI4K) complex, composed of PI4KA, EFR3 (EFR3A or EFR3B), TTC7 (TTC7A or TTC7B) and HYCC (HYCC1 or HYCC2). Interacts with PI4KA. Interaction with PI4KA is direct. Interacts with EFR3 (EFR3A or EFR3B), interaction is direct. Interacts with HYCC (HYCC1 or HYCC2), interaction is direct. Association with the PI4K complex is strongly reduced by TMEM150A. Expressed in epithelial cells of the intestine, thymus, and pancreas (at protein level).

It localises to the cytoplasm. The protein resides in the cell membrane. Functionally, component of a complex required to localize phosphatidylinositol 4-kinase (PI4K) to the plasma membrane. The complex acts as a regulator of phosphatidylinositol 4-phosphate (PtdIns(4)P) synthesis. In the complex, plays a central role in bridging PI4KA to EFR3B and HYCC1, via direct interactions. In Homo sapiens (Human), this protein is Tetratricopeptide repeat protein 7A.